Here is a 642-residue protein sequence, read N- to C-terminus: Kinesin-like protein KIF12 (642 aa).

Basic and acidic residues predominate over residues 1 to 13; it reads MEERGSPDGDPAR. The segment at 1–25 is disordered; sequence MEERGSPDGDPARNLEQGPEGSETP. S6 is subject to Phosphoserine. Residues 25-360 form the Kinesin motor domain; sequence PIQVVLRVRP…LRYASRAQRI (336 aa). ATP is bound at residue 104-111; it reads GQTGSGKT. A Phosphoserine modification is found at S369. Residues 376–465 adopt a coiled-coil conformation; sequence QQVENELLRL…QVHDLERRLL (90 aa). 2 disordered regions span residues 531 to 561 and 579 to 642; these read GHIS…SQSD and PSAP…LSSC. The span at 538–548 shows a compositional bias: pro residues; it reads WPPPWAPPPSP. The segment covering 610-642 has biased composition (polar residues); it reads TLTQQINSSLHLSQRQPQPSEDTQSPGQGLSSC. A Phosphoserine modification is found at S634.

This sequence belongs to the TRAFAC class myosin-kinesin ATPase superfamily. Kinesin family. In terms of tissue distribution, expressed in the liver.

It is found in the cytoplasm. The protein resides in the cytoskeleton. This Mus musculus (Mouse) protein is Kinesin-like protein KIF12 (Kif12).